We begin with the raw amino-acid sequence, 141 residues long: Endoribonuclease YbeY (141 aa).

The Zn(2+) site is built by His-107, His-111, and Asp-117.

This sequence belongs to the endoribonuclease YbeY family. Requires Zn(2+) as cofactor.

The protein resides in the cytoplasm. Single strand-specific metallo-endoribonuclease involved in late-stage 70S ribosome quality control and in maturation of the 3' terminus of the 16S rRNA. The protein is Endoribonuclease YbeY of Endomicrobium trichonymphae.